The sequence spans 514 residues: RNA polymerase I-specific transcription initiation factor RRN7 (514 aa).

The RRN7-type zinc-finger motif lies at 3-36 (TFIRGPICGTDNCPSRLWRIIDGRRTCQYGHVME). Positions 10, 15, 29, and 33 each coordinate Zn(2+). The tract at residues 37 to 66 (GDVEFNDDEDDLNGLGAGVITRRLNLTTNA) is B-reader. The interval 67-101 (TGSFQSSQLTNSQLLQQQQRQSHKKFKKLIGHEAK) is B-linker. Residues 102-210 (LLFLKSFQFI…KSWRIQLPNY (109 aa)) form an N-terminal cyclin fold region. The tract at residues 211–320 (YVSILEGSIS…MLTINWMLSF (110 aa)) is C-terminal cyclin fold.

It belongs to the RRN7/TAF1B family. Component of the core factor (CF) complex, which consists of RRN6, RRN7 and RRN11. The CF heterotrimer may further dimerize to form a hexamer. RRN7 interacts with RRN6, RRN11, SPT15 and RRN9.

Its subcellular location is the nucleus. It localises to the nucleolus. Its function is as follows. Component of RNA polymerase I core factor complex (CF) that acts as a SUA7/TFIIB-like factor and plays a key role in multiple steps during transcription initiation such as pre-initiation complex (PIC) assembly and postpolymerase recruitment events in polymerase I (Pol I) transcription. Binds rDNA promoters and plays a role in Pol I recruitment. After binding of UAF (upstream activation factor) to an upstream element of the promoter, CF is recruited in a SPT15/TBP-dependent manner to form a pre-initiation complex. The protein is RNA polymerase I-specific transcription initiation factor RRN7 (RRN7) of Saccharomyces cerevisiae (strain ATCC 204508 / S288c) (Baker's yeast).